A 232-amino-acid polypeptide reads, in one-letter code: Phosphatidylserine decarboxylase proenzyme (232 aa).

Serine 190 serves as the catalytic Schiff-base intermediate with substrate; via pyruvic acid. Serine 190 bears the Pyruvic acid (Ser); by autocatalysis mark.

It belongs to the phosphatidylserine decarboxylase family. PSD-A subfamily. As to quaternary structure, heterodimer of a large membrane-associated beta subunit and a small pyruvoyl-containing alpha subunit. Pyruvate serves as cofactor. Post-translationally, is synthesized initially as an inactive proenzyme. Formation of the active enzyme involves a self-maturation process in which the active site pyruvoyl group is generated from an internal serine residue via an autocatalytic post-translational modification. Two non-identical subunits are generated from the proenzyme in this reaction, and the pyruvate is formed at the N-terminus of the alpha chain, which is derived from the carboxyl end of the proenzyme. The post-translation cleavage follows an unusual pathway, termed non-hydrolytic serinolysis, in which the side chain hydroxyl group of the serine supplies its oxygen atom to form the C-terminus of the beta chain, while the remainder of the serine residue undergoes an oxidative deamination to produce ammonia and the pyruvoyl prosthetic group on the alpha chain.

It is found in the cell membrane. It catalyses the reaction a 1,2-diacyl-sn-glycero-3-phospho-L-serine + H(+) = a 1,2-diacyl-sn-glycero-3-phosphoethanolamine + CO2. It functions in the pathway phospholipid metabolism; phosphatidylethanolamine biosynthesis; phosphatidylethanolamine from CDP-diacylglycerol: step 2/2. Catalyzes the formation of phosphatidylethanolamine (PtdEtn) from phosphatidylserine (PtdSer). The chain is Phosphatidylserine decarboxylase proenzyme from Mesorhizobium japonicum (strain LMG 29417 / CECT 9101 / MAFF 303099) (Mesorhizobium loti (strain MAFF 303099)).